The primary structure comprises 585 residues: Voltage-gated potassium channel KCNC1 (585 aa).

Residues 1–190 lie on the Cytoplasmic side of the membrane; that stretch reads MGQGDESERI…EDPYSSRYAR (190 aa). A Phosphoserine modification is found at Ser44. Zn(2+) is bound by residues His77, Cys83, Cys104, and Cys105. Residues 121–147 form a disordered region; sequence SFGGAPLDNSADDADADGPGDSGDGED. Ser130, Ser142, Ser158, and Ser160 each carry phosphoserine. Acidic residues predominate over residues 130–147; that stretch reads SADDADADGPGDSGDGED. A helical membrane pass occupies residues 191–209; that stretch reads YVAFASLFFILVSITTFCL. N-linked (GlcNAc...) asparagine glycans are attached at residues Asn220 and Asn229. A helical membrane pass occupies residues 248 to 267; sequence IEGVCVVWFTFEFLMRVVFC. Residues 268–276 lie on the Cytoplasmic side of the membrane; it reads PNKVEFIKN. The helical transmembrane segment at 277-295 threads the bilayer; it reads SLNIIDFVAILPFYLEVGL. A helical; Voltage-sensor transmembrane segment spans residues 309–331; that stretch reads FLRVVRFVRILRIFKLTRHFVGL. Over 332 to 344 the chain is Cytoplasmic; sequence RVLGHTLRASTNE. A helical membrane pass occupies residues 345-366; that stretch reads FLLLIIFLALGVLIFATMIYYA. The K(+) site is built by Thr400, Leu401, Gly402, and Tyr403. Residues 400–405 carry the Selectivity filter motif; the sequence is TLGYGD. The chain crosses the membrane as a helical span at residues 415-436; that stretch reads LVGALCALAGVLTIAMPVPVIV. The Cytoplasmic segment spans residues 437–585; sequence NNFGMYYSLA…YMPTEAVRVT (149 aa). The residue at position 474 (Ser474) is a Phosphoserine. The residue at position 483 (Thr483) is a Phosphothreonine.

The protein belongs to the potassium channel family. C (Shaw) (TC 1.A.1.2) subfamily. Kv3.1/KCNC1 sub-subfamily. As to quaternary structure, homotetramer. Homomultimer. Heteromultimer with KCNG3, KCNG4 and KCNV2. Heteromultimer with KCNC2. Heterotetramer with KCNC3. Interacts with the ancillary subunits KCNE1 and KCNE2; the interaction modulates channel activity. In terms of processing, N-glycosylated; contains sialylated glycans. Expressed in brain. Expressed in globus pallidal neurons of the basal ganglia (at protein level). Detected on Purkinje cells in the cerebellum molecular layer (at protein level).

The protein localises to the cell membrane. It is found in the cell projection. The protein resides in the axon. It localises to the presynaptic cell membrane. It catalyses the reaction K(+)(in) = K(+)(out). Voltage-gated potassium channel that opens in response to the voltage difference across the membrane and through which potassium ions pass in accordance with their electrochemical gradient. The mechanism is time-dependent and inactivation is slow. Plays an important role in the rapid repolarization of fast-firing brain neurons. Can form functional homotetrameric channels and heterotetrameric channels that contain variable proportions of KCNC2, and possibly other family members as well. Contributes to fire sustained trains of very brief action potentials at high frequency in pallidal neurons. This Rattus norvegicus (Rat) protein is Voltage-gated potassium channel KCNC1.